The following is a 549-amino-acid chain: E-selectin (549 aa).

An N-terminal signal peptide occupies residues 1-21 (MNASCFLSALTFVLLIGKSIA). Positions 22–139 (WYYNASSELM…CDKKKLALCY (118 aa)) constitute a C-type lectin domain. Topologically, residues 22 to 494 (WYYNASSELM…CEAPANPPRP (473 aa)) are extracellular. N-linked (GlcNAc...) asparagine glycans are attached at residues asparagine 25 and asparagine 60. Intrachain disulfides connect cysteine 40–cysteine 138, cysteine 111–cysteine 130, cysteine 143–cysteine 154, cysteine 148–cysteine 163, cysteine 165–cysteine 174, cysteine 180–cysteine 225, cysteine 193–cysteine 206, cysteine 210–cysteine 238, cysteine 243–cysteine 287, cysteine 256–cysteine 269, cysteine 273–cysteine 300, cysteine 305–cysteine 350, cysteine 336–cysteine 363, cysteine 368–cysteine 413, cysteine 399–cysteine 426, cysteine 431–cysteine 472, and cysteine 458–cysteine 485. Ca(2+) is bound by residues glutamate 101, asparagine 103, and glutamate 109. A carbohydrate is bound by residues 101–109 (EPNNKQRNE), 113–118 (EIYIQR), and 126–128 (NDE). Ca(2+)-binding residues include asparagine 126 and aspartate 127. Residues 140 to 175 (TASCTNTSCSGHGECVETINSYTCKCHPGFLGPKCD) enclose the EGF-like domain. Asparagine 145 is a glycosylation site (N-linked (GlcNAc...) asparagine). Sushi domains are found at residues 178 to 240 (VTCQ…ACHV), 241 to 302 (VECK…SCKA), 303 to 365 (VTCD…VCKA), 366 to 428 (SQCE…TCAG), and 429 to 487 (VQCS…TCEA). N-linked (GlcNAc...) asparagine glycans are attached at residues asparagine 192 and asparagine 203. A glycan (N-linked (GlcNAc...) asparagine) is linked at asparagine 266. N-linked (GlcNAc...) asparagine glycans are attached at residues asparagine 313, asparagine 320, and asparagine 333. Residues asparagine 441 and asparagine 465 are each glycosylated (N-linked (GlcNAc...) asparagine). A helical transmembrane segment spans residues 495–516 (LVVALSVAATSLLTLSSLIYVL). The Cytoplasmic segment spans residues 517–549 (KRFFWKKAKKFVPASSCQSLQSFENYQGPSYII).

Belongs to the selectin/LECAM family. In terms of assembly, interacts with SELPLG/PSGL1 and PODXL2 through the sialyl Lewis X epitope. SELPLG sulfation appears not to be required for this interaction.

Its subcellular location is the cell membrane. Its function is as follows. Cell-surface glycoprotein having a role in immunoadhesion. Mediates in the adhesion of blood neutrophils in cytokine-activated endothelium through interaction with SELPLG/PSGL1. May have a role in capillary morphogenesis. The protein is E-selectin (Sele) of Rattus norvegicus (Rat).